A 24-amino-acid polypeptide reads, in one-letter code: M-ectatotoxin-Eb2b (24 aa).

Expressed by the venom gland.

It localises to the secreted. Functionally, antimicrobial peptide active against Gram-negative bacterium E.coli MH1 (MIC=2.5 uM) and P.aeruginosa PAO1 (MIC=10 uM) and against Gram-positive bacterium A.globiformis VKM Ac-1112 (MIC=0.6 uM). The polypeptide is M-ectatotoxin-Eb2b (Ectatomma brunneum (Ant)).